The following is a 526-amino-acid chain: Peptide chain release factor 3 (526 aa).

The tr-type G domain occupies 9-277 (DKRRTFAIIS…GIVEWAPKPQ (269 aa)). Residues 18–25 (SHPDAGKT), 86–90 (DTPGH), and 140–143 (NKLD) each bind GTP.

It belongs to the TRAFAC class translation factor GTPase superfamily. Classic translation factor GTPase family. PrfC subfamily.

Its subcellular location is the cytoplasm. Functionally, increases the formation of ribosomal termination complexes and stimulates activities of RF-1 and RF-2. It binds guanine nucleotides and has strong preference for UGA stop codons. It may interact directly with the ribosome. The stimulation of RF-1 and RF-2 is significantly reduced by GTP and GDP, but not by GMP. The protein is Peptide chain release factor 3 of Shewanella woodyi (strain ATCC 51908 / MS32).